Reading from the N-terminus, the 1169-residue chain is Chromosome partition protein Smc (1169 aa).

Position 32–39 (32–39 (PNGSGKSN)) interacts with ATP. Residues 166-507 (DEISGIAEFD…RIKALKEMEE (342 aa)) are a coiled coil. One can recognise an SMC hinge domain in the interval 523–636 (PGIIDIVGNL…ENIDIAKELA (114 aa)). A coiled-coil region spans residues 676-1030 (SKLNKIADEI…NKKKEVFMEV (355 aa)).

This sequence belongs to the SMC family. As to quaternary structure, homodimer.

It localises to the cytoplasm. In terms of biological role, required for chromosome condensation and partitioning. The protein is Chromosome partition protein Smc of Methanocaldococcus jannaschii (strain ATCC 43067 / DSM 2661 / JAL-1 / JCM 10045 / NBRC 100440) (Methanococcus jannaschii).